Reading from the N-terminus, the 90-residue chain is Probable Fe(2+)-trafficking protein (90 aa).

Belongs to the Fe(2+)-trafficking protein family. Monomer.

Functionally, could be a mediator in iron transactions between iron acquisition and iron-requiring processes, such as synthesis and/or repair of Fe-S clusters in biosynthetic enzymes. This chain is Probable Fe(2+)-trafficking protein, found in Serratia proteamaculans (strain 568).